The chain runs to 635 residues: DNA topoisomerase 4 subunit B (635 aa).

ATP contacts are provided by residues Y5, N45, D72, 113 to 119, and K340; that span reads GLHGVGA. In terms of domain architecture, Toprim spans 422 to 537; that stretch reads RELFVVEGDS…KGHIYLALPP (116 aa). Mg(2+)-binding residues include E428, D502, and D504.

It belongs to the type II topoisomerase family. ParE type 2 subfamily. Heterotetramer composed of ParC and ParE. The cofactor is Mg(2+). Mn(2+) serves as cofactor. Requires Ca(2+) as cofactor.

It catalyses the reaction ATP-dependent breakage, passage and rejoining of double-stranded DNA.. Topoisomerase IV is essential for chromosome segregation. It relaxes supercoiled DNA. Performs the decatenation events required during the replication of a circular DNA molecule. The polypeptide is DNA topoisomerase 4 subunit B (Mycoplasma pneumoniae (strain ATCC 29342 / M129 / Subtype 1) (Mycoplasmoides pneumoniae)).